A 901-amino-acid chain; its full sequence is Protein translocase subunit SecA (901 aa).

Residues Q87, 105-109 (GEGKT), and D512 each bind ATP. 4 residues coordinate Zn(2+): C885, C887, C896, and H897.

The protein belongs to the SecA family. As to quaternary structure, monomer and homodimer. Part of the essential Sec protein translocation apparatus which comprises SecA, SecYEG and auxiliary proteins SecDF-YajC and YidC. It depends on Zn(2+) as a cofactor.

The protein localises to the cell inner membrane. Its subcellular location is the cytoplasm. The enzyme catalyses ATP + H2O + cellular proteinSide 1 = ADP + phosphate + cellular proteinSide 2.. In terms of biological role, part of the Sec protein translocase complex. Interacts with the SecYEG preprotein conducting channel. Has a central role in coupling the hydrolysis of ATP to the transfer of proteins into and across the cell membrane, serving both as a receptor for the preprotein-SecB complex and as an ATP-driven molecular motor driving the stepwise translocation of polypeptide chains across the membrane. The polypeptide is Protein translocase subunit SecA (Salmonella enteritidis PT4 (strain P125109)).